The primary structure comprises 249 residues: Probable transcriptional regulatory protein ERGA_CDS_03720 (249 aa).

Positions 1–21 are disordered; that stretch reads MAGHSQFANIKHRKGAQDAKR.

It belongs to the TACO1 family.

It localises to the cytoplasm. The sequence is that of Probable transcriptional regulatory protein ERGA_CDS_03720 from Ehrlichia ruminantium (strain Gardel).